A 114-amino-acid polypeptide reads, in one-letter code: Large ribosomal subunit protein uL22 (114 aa).

It belongs to the universal ribosomal protein uL22 family. As to quaternary structure, part of the 50S ribosomal subunit.

Functionally, this protein binds specifically to 23S rRNA; its binding is stimulated by other ribosomal proteins, e.g. L4, L17, and L20. It is important during the early stages of 50S assembly. It makes multiple contacts with different domains of the 23S rRNA in the assembled 50S subunit and ribosome. In terms of biological role, the globular domain of the protein is located near the polypeptide exit tunnel on the outside of the subunit, while an extended beta-hairpin is found that lines the wall of the exit tunnel in the center of the 70S ribosome. In Ehrlichia ruminantium (strain Gardel), this protein is Large ribosomal subunit protein uL22.